Reading from the N-terminus, the 280-residue chain is NAD-capped RNA hydrolase NudC (280 aa).

Substrate is bound at residue Arg83. Zn(2+)-binding residues include Cys113, Cys116, Cys131, and Cys134. Substrate is bound at residue Tyr139. One can recognise a Nudix hydrolase domain in the interval Pro140–Leu268. The a divalent metal cation site is built by Ala177, Glu193, and Glu197. A Nudix box motif is present at residues Gly178–Gly199. Residue Gln211–Ser218 coordinates substrate. Glu238 is a binding site for a divalent metal cation.

Belongs to the Nudix hydrolase family. NudC subfamily. As to quaternary structure, homodimer. The cofactor is Mg(2+). Mn(2+) is required as a cofactor. It depends on Zn(2+) as a cofactor.

The catalysed reaction is a 5'-end NAD(+)-phospho-ribonucleoside in mRNA + H2O = a 5'-end phospho-adenosine-phospho-ribonucleoside in mRNA + beta-nicotinamide D-ribonucleotide + 2 H(+). The enzyme catalyses NAD(+) + H2O = beta-nicotinamide D-ribonucleotide + AMP + 2 H(+). It catalyses the reaction NADH + H2O = reduced beta-nicotinamide D-ribonucleotide + AMP + 2 H(+). Its function is as follows. mRNA decapping enzyme that specifically removes the nicotinamide adenine dinucleotide (NAD) cap from a subset of mRNAs by hydrolyzing the diphosphate linkage to produce nicotinamide mononucleotide (NMN) and 5' monophosphate mRNA. The NAD-cap is present at the 5'-end of some mRNAs and stabilizes RNA against 5'-processing. Has preference for mRNAs with a 5'-end purine. Catalyzes the hydrolysis of a broad range of dinucleotide pyrophosphates. The chain is NAD-capped RNA hydrolase NudC from Deinococcus radiodurans (strain ATCC 13939 / DSM 20539 / JCM 16871 / CCUG 27074 / LMG 4051 / NBRC 15346 / NCIMB 9279 / VKM B-1422 / R1).